Here is a 287-residue protein sequence, read N- to C-terminus: ATP synthase gamma chain (287 aa).

Belongs to the ATPase gamma chain family. As to quaternary structure, F-type ATPases have 2 components, CF(1) - the catalytic core - and CF(0) - the membrane proton channel. CF(1) has five subunits: alpha(3), beta(3), gamma(1), delta(1), epsilon(1). CF(0) has three main subunits: a, b and c.

It localises to the cell inner membrane. Its function is as follows. Produces ATP from ADP in the presence of a proton gradient across the membrane. The gamma chain is believed to be important in regulating ATPase activity and the flow of protons through the CF(0) complex. This Cronobacter sakazakii (strain ATCC BAA-894) (Enterobacter sakazakii) protein is ATP synthase gamma chain.